Here is a 292-residue protein sequence, read N- to C-terminus: Cholesterol ring-cleaving hydrolase IpdA subunit (292 aa).

This sequence belongs to the 3-oxoacid CoA-transferase subunit A family. As to quaternary structure, heterotetramer composed of 2 IpdA subunits and 2 IpdB subunits.

It catalyses the reaction (3E)-2-(2-carboxylatoethyl)-3-methyl-6-oxocyclohex-1-ene-1-carboxyl-CoA + H2O = 6-methyl-3,7-dioxodecanedioyl-CoA. It functions in the pathway steroid metabolism; cholesterol degradation. Functionally, involved in the final steps of cholesterol and steroid degradation. Opens the last steroid ring of cholesterol by catalyzing the hydrolysis of (3E)-2-(2-carboxylatoethyl)-3-methyl-6-oxocyclohex-1-ene-1-carboxyl-CoA (COCHEA-CoA) to 6-methyl-3,7-dioxodecanedioyl-CoA (MeDODA-CoA). In Mycobacterium tuberculosis (strain CDC 1551 / Oshkosh), this protein is Cholesterol ring-cleaving hydrolase IpdA subunit.